The sequence spans 276 residues: Small ribosomal subunit protein uS2 (276 aa).

This sequence belongs to the universal ribosomal protein uS2 family.

The polypeptide is Small ribosomal subunit protein uS2 (Chlamydia abortus (strain DSM 27085 / S26/3) (Chlamydophila abortus)).